We begin with the raw amino-acid sequence, 225 residues long: Pre-mRNA-splicing factor SPF27 (225 aa).

Residues 138–222 adopt a coiled-coil conformation; that stretch reads SNDNLALMIE…QGDENKENIR (85 aa).

It belongs to the SPF27 family. As to quaternary structure, component of the pre-catalytic and catalytic spliceosome complexes. Component of the postcatalytic spliceosome P complex.

The protein resides in the nucleus. Functionally, required for pre-mRNA splicing as component of the activated spliceosome. May have a scaffolding role in the spliceosome assembly as it contacts all other components of the core complex. In Danio rerio (Zebrafish), this protein is Pre-mRNA-splicing factor SPF27 (bcas2).